A 280-amino-acid polypeptide reads, in one-letter code: Urease accessory protein UreD 1 (280 aa).

It belongs to the UreD family. In terms of assembly, ureD, UreF and UreG form a complex that acts as a GTP-hydrolysis-dependent molecular chaperone, activating the urease apoprotein by helping to assemble the nickel containing metallocenter of UreC. The UreE protein probably delivers the nickel.

Its subcellular location is the cytoplasm. Its function is as follows. Required for maturation of urease via the functional incorporation of the urease nickel metallocenter. The polypeptide is Urease accessory protein UreD 1 (Brucella canis (strain ATCC 23365 / NCTC 10854 / RM-666)).